An 83-amino-acid polypeptide reads, in one-letter code: Cytochrome b559 subunit alpha (83 aa).

Residues 21 to 35 (VIHSITIPSLFIAGW) form a helical membrane-spanning segment. His-23 is a heme binding site.

It belongs to the PsbE/PsbF family. In terms of assembly, heterodimer of an alpha subunit and a beta subunit. PSII is composed of 1 copy each of membrane proteins PsbA, PsbB, PsbC, PsbD, PsbE, PsbF, PsbH, PsbI, PsbJ, PsbK, PsbL, PsbM, PsbT, PsbX, PsbY, PsbZ, Psb30/Ycf12, at least 3 peripheral proteins of the oxygen-evolving complex and a large number of cofactors. It forms dimeric complexes. Heme b serves as cofactor.

Its subcellular location is the plastid. It is found in the chloroplast thylakoid membrane. This b-type cytochrome is tightly associated with the reaction center of photosystem II (PSII). PSII is a light-driven water:plastoquinone oxidoreductase that uses light energy to abstract electrons from H(2)O, generating O(2) and a proton gradient subsequently used for ATP formation. It consists of a core antenna complex that captures photons, and an electron transfer chain that converts photonic excitation into a charge separation. This is Cytochrome b559 subunit alpha from Chlorella vulgaris (Green alga).